The primary structure comprises 335 residues: Legumin type B (335 aa).

Disordered stretches follow at residues 47–87 and 102–155; these read PETQ…GNSV and TEED…GRNG. Basic and acidic residues predominate over residues 105-118; that stretch reads DTAKRLRSPRDKRN. The segment covering 135-144 has biased composition (acidic residues); the sequence is QQEEEEEEEE. Positions 167-314 constitute a Cupin type-1 domain; that stretch reads ENIAQPARAD…AFGLRQRQVT (148 aa).

Belongs to the 11S seed storage protein (globulins) family. As to quaternary structure, hexamer; each subunit is composed of an acidic and a basic chain derived from a single precursor and linked by a disulfide bond.

This protein found in the seeds of many leguminous and non-leguminous plants is the source of sulfur-containing amino acids in seed meals. This chain is Legumin type B (LEB2), found in Vicia faba (Broad bean).